Consider the following 30-residue polypeptide: uncharacterized protein (30 aa).

A signal peptide spans 1–22 (MRFLFFLPPSFITSFLYLALYS).

This is an uncharacterized protein from Schizosaccharomyces pombe (strain 972 / ATCC 24843) (Fission yeast).